The chain runs to 137 residues: uncharacterized protein (137 aa).

Helical transmembrane passes span 26–42 (CSLC…FFAM) and 52–69 (ASIP…GSIL).

It localises to the membrane. This is an uncharacterized protein from Saccharomyces cerevisiae (strain ATCC 204508 / S288c) (Baker's yeast).